The chain runs to 203 residues: GTP-binding protein YPTC1 (203 aa).

Residues 15–23 (GDSGVGKSC), 33–40 (YTESYIST), 63–67 (DTAGQ), 121–124 (NKSD), and 151–153 (SAK) contribute to the GTP site. Residues 37-45 (YISTIGVDF) carry the Effector region motif. Residues 174 to 203 (ASQPIPTKAGGPVVRPQEGKPINSKSSSCC) are disordered. 2 S-geranylgeranyl cysteine lipidation sites follow: cysteine 202 and cysteine 203.

This sequence belongs to the small GTPase superfamily. Rab family.

The protein localises to the cell membrane. Functionally, protein transport. Probably involved in vesicular traffic. The sequence is that of GTP-binding protein YPTC1 (YPTC1) from Chlamydomonas reinhardtii (Chlamydomonas smithii).